The primary structure comprises 344 residues: Arginine N-succinyltransferase (344 aa).

Leu-125 is a succinyl-CoA binding site. The active-site Proton donor is the His-229.

Belongs to the arginine N-succinyltransferase family.

It catalyses the reaction succinyl-CoA + L-arginine = N(2)-succinyl-L-arginine + CoA + H(+). The protein operates within amino-acid degradation; L-arginine degradation via AST pathway; L-glutamate and succinate from L-arginine: step 1/5. Functionally, catalyzes the transfer of succinyl-CoA to arginine to produce N(2)-succinylarginine. The protein is Arginine N-succinyltransferase of Salmonella typhi.